Reading from the N-terminus, the 390-residue chain is MEMNQKTAFMGINIKDEGPSNVMIIKALNSSSSLLDIPSFMKVAGIEFDPIMFNHFWQVLVDNGDRLPHVGETTLNWLGYEGVFTKQKEKFINMLKRNQISFKELSYQDNEIQLYPSIQKEMLLLPNESAKTKSKWLLMNPDDFKMAIMGLKTKNSEKIKRYYVTLEKTMKLHSEYALYFHDRKAQEEKERERQRAEDEKRSILGEMSEMRQYMQKMGITLEDTREEVKKVNIQNKDIKAQNEEIKAQNEDLAFDLSDVRDRLIEAAEDRSPKLETKPLRERFVIIKRKDSSFPYYAIRGQDVYVKGRLTHFKNTRYPELKIIFDTNYQPNPRNLYIRFKELKDERFIIAGNNIKTVDSSNKLEKEMLELFEKLNEEKHNIYFFFNFNDF.

A coiled-coil region spans residues 181-263 (HDRKAQEEKE…FDLSDVRDRL (83 aa)).

The chain is Putative MSV199 domain-containing protein 211L from Acheta domesticus (House cricket).